The chain runs to 290 residues: 4-hydroxy-tetrahydrodipicolinate synthase (290 aa).

Thr44 contacts pyruvate. Catalysis depends on Tyr132, which acts as the Proton donor/acceptor. The active-site Schiff-base intermediate with substrate is the Lys160. Ile202 provides a ligand contact to pyruvate.

This sequence belongs to the DapA family. As to quaternary structure, homotetramer; dimer of dimers.

Its subcellular location is the cytoplasm. It catalyses the reaction L-aspartate 4-semialdehyde + pyruvate = (2S,4S)-4-hydroxy-2,3,4,5-tetrahydrodipicolinate + H2O + H(+). Its pathway is amino-acid biosynthesis; L-lysine biosynthesis via DAP pathway; (S)-tetrahydrodipicolinate from L-aspartate: step 3/4. In terms of biological role, catalyzes the condensation of (S)-aspartate-beta-semialdehyde [(S)-ASA] and pyruvate to 4-hydroxy-tetrahydrodipicolinate (HTPA). The polypeptide is 4-hydroxy-tetrahydrodipicolinate synthase (Cereibacter sphaeroides (strain ATCC 17025 / ATH 2.4.3) (Rhodobacter sphaeroides)).